We begin with the raw amino-acid sequence, 968 residues long: Protein translocase subunit SecA 1 (968 aa).

Residues Gln86, 104–108 (GEGKT), and Asp493 each bind ATP. Basic and acidic residues-rich tracts occupy residues 858–868 (EAEKTEDKAED) and 883–898 (ESAKDTAQDKDAESVA). The tract at residues 858 to 968 (EAEKTEDKAE…KCHGAPKSRV (111 aa)) is disordered. Positions 949, 951, 960, and 961 each coordinate Zn(2+). A compositionally biased stretch (basic residues) spans 955–968 (KKYKKCHGAPKSRV).

Belongs to the SecA family. Monomer and homodimer. Part of the essential Sec protein translocation apparatus which comprises SecA, SecYEG and auxiliary proteins SecDF. Other proteins may also be involved. The cofactor is Zn(2+).

The protein resides in the cell membrane. It localises to the cytoplasm. The catalysed reaction is ATP + H2O + cellular proteinSide 1 = ADP + phosphate + cellular proteinSide 2.. Part of the Sec protein translocase complex. Interacts with the SecYEG preprotein conducting channel. Has a central role in coupling the hydrolysis of ATP to the transfer of proteins into and across the cell membrane, serving as an ATP-driven molecular motor driving the stepwise translocation of polypeptide chains across the membrane. This Thermobifida fusca (strain YX) protein is Protein translocase subunit SecA 1.